We begin with the raw amino-acid sequence, 431 residues long: Glucose-1-phosphate adenylyltransferase (431 aa).

Alpha-D-glucose 1-phosphate is bound by residues G163, E178–K179, and S210.

Belongs to the bacterial/plant glucose-1-phosphate adenylyltransferase family. Homotetramer.

It catalyses the reaction alpha-D-glucose 1-phosphate + ATP + H(+) = ADP-alpha-D-glucose + diphosphate. Its pathway is glycan biosynthesis; glycogen biosynthesis. Functionally, involved in the biosynthesis of ADP-glucose, a building block required for the elongation reactions to produce glycogen. Catalyzes the reaction between ATP and alpha-D-glucose 1-phosphate (G1P) to produce pyrophosphate and ADP-Glc. This is Glucose-1-phosphate adenylyltransferase from Synechococcus sp. (strain WH7803).